The primary structure comprises 331 residues: Pantothenate kinase (331 aa).

109–116 (GSVAVGKS) provides a ligand contact to ATP.

The protein belongs to the prokaryotic pantothenate kinase family.

Its subcellular location is the cytoplasm. The enzyme catalyses (R)-pantothenate + ATP = (R)-4'-phosphopantothenate + ADP + H(+). The protein operates within cofactor biosynthesis; coenzyme A biosynthesis; CoA from (R)-pantothenate: step 1/5. This chain is Pantothenate kinase, found in Rhizobium rhizogenes (strain K84 / ATCC BAA-868) (Agrobacterium radiobacter).